Reading from the N-terminus, the 313-residue chain is Nodulation protein D 3 (313 aa).

The HTH lysR-type domain occupies 6-63; it reads LDLNLLVALDALMTKRSVTAAARSINLSQPAMSSAIARLRSYFQDELFRMQGRELITT. The segment at residues 23–42 is a DNA-binding region (H-T-H motif); it reads VTAAARSINLSQPAMSSAIA.

It belongs to the LysR transcriptional regulatory family.

NodD regulates the expression of the nodABCFE genes which encode other nodulation proteins. NodD is also a negative regulator of its own expression. Binds flavonoids as inducers. The chain is Nodulation protein D 3 (nodD3) from Rhizobium meliloti (strain 1021) (Ensifer meliloti).